A 322-amino-acid chain; its full sequence is Aldo-keto reductase family 1 member C23 (322 aa).

NADP(+) is bound at residue G20–Y24. Residue K31 coordinates substrate. D50 provides a ligand contact to NADP(+). Y55 (proton donor) is an active-site residue. H117 lines the substrate pocket. Residues S166–N167, Q190, Y216–S221, and K269–N279 contribute to the NADP(+) site.

Belongs to the aldo/keto reductase family. Monomer. As to expression, detected in follicle granulosa cells (at protein level). Detected in heart, lung, liver, kidney, stomach, uterus, testis, skeletal muscle and granulosa cells of the follicle wall.

Its subcellular location is the cytoplasm. Functionally, NADP-dependent oxidoreductase that has 20-alpha-hydroxysteroid dehydrogenase activity. The protein is Aldo-keto reductase family 1 member C23 (AKR1C23) of Equus caballus (Horse).